The following is a 285-amino-acid chain: Putative sugar uptake protein lp_2503 (285 aa).

9 consecutive transmembrane segments (helical) span residues Gly-2–Gly-21, Thr-31–Val-48, Ser-55–Gln-72, Gly-112–Leu-134, Asn-147–Val-169, Val-179–Phe-196, Asn-209–Ala-228, Ala-233–Gly-255, and Val-264–Met-283.

The protein belongs to the GRP transporter (TC 2.A.7.5) family.

The protein resides in the cell membrane. This is Putative sugar uptake protein lp_2503 from Lactiplantibacillus plantarum (strain ATCC BAA-793 / NCIMB 8826 / WCFS1) (Lactobacillus plantarum).